The following is a 188-amino-acid chain: Type II secretion system protein H (188 aa).

The propeptide at M1–G10 is leader sequence. An N-methylphenylalanine modification is found at F11. The helical transmembrane segment at L13–P35 threads the bilayer.

This sequence belongs to the GSP H family. In terms of assembly, type II secretion is composed of four main components: the outer membrane complex, the inner membrane complex, the cytoplasmic secretion ATPase and the periplasm-spanning pseudopilus. Interacts with core component OutG. Post-translationally, cleaved by prepilin peptidase. In terms of processing, methylated by prepilin peptidase at the amino group of the N-terminal phenylalanine once the leader sequence is cleaved by prepilin peptidase.

It is found in the cell inner membrane. In terms of biological role, component of the type II secretion system required for the energy-dependent secretion of extracellular factors such as proteases and toxins from the periplasm. Part of the pseudopilus tip complex that is critical for the recognition and binding of secretion substrates. The chain is Type II secretion system protein H (outH) from Pectobacterium carotovorum subsp. carotovorum (Erwinia carotovora subsp. carotovora).